We begin with the raw amino-acid sequence, 197 residues long: Protein tyrosine phosphatase receptor type C-associated protein (197 aa).

A helical transmembrane segment spans residues 33–53 (VVTIVLLLLLLLLLVTALALA). Residues serine 99 and serine 103 each carry the phosphoserine modification. Disordered stretches follow at residues 120–164 (GPEE…GSSA) and 177–197 (SAAW…VTAL). The span at 124-145 (AAAKEEEQRCQAEQTRDPRDTD) shows a compositional bias: basic and acidic residues.

Interacts with CD45/PTPRC. Post-translationally, phosphorylated on tyrosine residues. In terms of tissue distribution, leukocyte-specific. Expressed in B- and T-cell lines, in spleen, thymus, and bone marrow of adult mice, and in embryos.

Its subcellular location is the membrane. The sequence is that of Protein tyrosine phosphatase receptor type C-associated protein (Ptprcap) from Mus musculus (Mouse).